We begin with the raw amino-acid sequence, 371 residues long: 4-hydroxy-3-methylbut-2-en-1-yl diphosphate synthase (flavodoxin) (371 aa).

[4Fe-4S] cluster contacts are provided by cysteine 270, cysteine 273, cysteine 305, and glutamate 312.

It belongs to the IspG family. [4Fe-4S] cluster serves as cofactor.

It carries out the reaction (2E)-4-hydroxy-3-methylbut-2-enyl diphosphate + oxidized [flavodoxin] + H2O + 2 H(+) = 2-C-methyl-D-erythritol 2,4-cyclic diphosphate + reduced [flavodoxin]. It functions in the pathway isoprenoid biosynthesis; isopentenyl diphosphate biosynthesis via DXP pathway; isopentenyl diphosphate from 1-deoxy-D-xylulose 5-phosphate: step 5/6. Converts 2C-methyl-D-erythritol 2,4-cyclodiphosphate (ME-2,4cPP) into 1-hydroxy-2-methyl-2-(E)-butenyl 4-diphosphate. This Shewanella woodyi (strain ATCC 51908 / MS32) protein is 4-hydroxy-3-methylbut-2-en-1-yl diphosphate synthase (flavodoxin).